Here is an 807-residue protein sequence, read N- to C-terminus: Glycerol-3-phosphate acyltransferase (807 aa).

The HXXXXD motif signature appears at 308–313; the sequence is CHRSHM.

This sequence belongs to the GPAT/DAPAT family.

The protein resides in the cell inner membrane. The catalysed reaction is sn-glycerol 3-phosphate + an acyl-CoA = a 1-acyl-sn-glycero-3-phosphate + CoA. The protein operates within phospholipid metabolism; CDP-diacylglycerol biosynthesis; CDP-diacylglycerol from sn-glycerol 3-phosphate: step 1/3. In Shewanella sp. (strain MR-7), this protein is Glycerol-3-phosphate acyltransferase.